A 274-amino-acid chain; its full sequence is 2,3,4,5-tetrahydropyridine-2,6-dicarboxylate N-succinyltransferase (274 aa).

Positions 104 and 141 each coordinate substrate.

It belongs to the transferase hexapeptide repeat family. In terms of assembly, homotrimer.

It is found in the cytoplasm. It catalyses the reaction (S)-2,3,4,5-tetrahydrodipicolinate + succinyl-CoA + H2O = (S)-2-succinylamino-6-oxoheptanedioate + CoA. The protein operates within amino-acid biosynthesis; L-lysine biosynthesis via DAP pathway; LL-2,6-diaminopimelate from (S)-tetrahydrodipicolinate (succinylase route): step 1/3. This chain is 2,3,4,5-tetrahydropyridine-2,6-dicarboxylate N-succinyltransferase, found in Shewanella amazonensis (strain ATCC BAA-1098 / SB2B).